The following is a 243-amino-acid chain: Orotidine 5'-phosphate decarboxylase (243 aa).

Residues Asp-19, Lys-41, 69-78 (DLKFFDIPAT), Thr-124, Arg-185, Gln-194, Gly-214, and Arg-215 contribute to the substrate site. Lys-71 acts as the Proton donor in catalysis.

It belongs to the OMP decarboxylase family. Type 1 subfamily. In terms of assembly, homodimer.

The catalysed reaction is orotidine 5'-phosphate + H(+) = UMP + CO2. The protein operates within pyrimidine metabolism; UMP biosynthesis via de novo pathway; UMP from orotate: step 2/2. Functionally, catalyzes the decarboxylation of orotidine 5'-monophosphate (OMP) to uridine 5'-monophosphate (UMP). In Xanthomonas euvesicatoria pv. vesicatoria (strain 85-10) (Xanthomonas campestris pv. vesicatoria), this protein is Orotidine 5'-phosphate decarboxylase.